We begin with the raw amino-acid sequence, 113 residues long: UPF0122 protein LSEI_1603 (113 aa).

The protein belongs to the UPF0122 family.

In terms of biological role, might take part in the signal recognition particle (SRP) pathway. This is inferred from the conservation of its genetic proximity to ftsY/ffh. May be a regulatory protein. This Lacticaseibacillus paracasei (strain ATCC 334 / BCRC 17002 / CCUG 31169 / CIP 107868 / KCTC 3260 / NRRL B-441) (Lactobacillus paracasei) protein is UPF0122 protein LSEI_1603.